The chain runs to 102 residues: Protein Tat (102 aa).

An interaction with human CREBBP region spans residues 1–24 (MEPVDPRLEPWKHPGSQPKTACNN). The tract at residues 1-48 (MEPVDPRLEPWKHPGSQPKTACNNCYCKKCCYHCQVCFLTKGLGISYG) is transactivation. Residues C22, C25, and C27 each coordinate Zn(2+). The cysteine-rich stretch occupies residues 22–37 (CNNCYCKKCCYHCQVC). K28 is modified (N6-acetyllysine; by host PCAF). The Zn(2+) site is built by C30, H33, C34, and C37. The core stretch occupies residues 38–48 (FLTKGLGISYG). Positions 48-102 (GRKKRRQRRGPPQGSQTHQVSLSKQPTSQPRGDPTGPKESKEKVERETETDPAVQ) are disordered. The Nuclear localization signal, RNA-binding (TAR), and protein transduction motif lies at 49–57 (RKKRRQRRG). An interaction with the host capping enzyme RNGTT region spans residues 49-86 (RKKRRQRRGPPQGSQTHQVSLSKQPTSQPRGDPTGPKE). An N6-acetyllysine; by host EP300 and GCN5L2 mark is found at K50 and K51. Residues R52 and R53 each carry the asymmetric dimethylarginine; by host PRMT6 modification. A compositionally biased stretch (polar residues) spans 62-77 (SQTHQVSLSKQPTSQP). A Glycyl lysine isopeptide (Lys-Gly) (interchain with G-Cter in ubiquitin) cross-link involves residue K71. The Cell attachment site motif lies at 78 to 80 (RGD). The span at 83 to 96 (GPKESKEKVERETE) shows a compositional bias: basic and acidic residues.

The protein belongs to the lentiviruses Tat family. Interacts with host CCNT1. Associates with the P-TEFb complex composed at least of Tat, P-TEFb (CDK9 and CCNT1), TAR RNA, RNA Pol II. Recruits the HATs CREBBP, TAF1/TFIID, EP300, PCAF and GCN5L2. Interacts with host KAT5/Tip60; this interaction targets the latter to degradation. Interacts with the host deacetylase SIRT1. Interacts with host capping enzyme RNGTT; this interaction stimulates RNGTT. Binds to host KDR, and to the host integrins ITGAV/ITGB3 and ITGA5/ITGB1. Interacts with host KPNB1/importin beta-1 without previous binding to KPNA1/importin alpha-1. Interacts with EIF2AK2. Interacts with host nucleosome assembly protein NAP1L1; this interaction may be required for the transport of Tat within the nucleus, since the two proteins interact at the nuclear rim. Interacts with host C1QBP/SF2P32; this interaction involves lysine-acetylated Tat. Interacts with the host chemokine receptors CCR2, CCR3 and CXCR4. Interacts with host DPP4/CD26; this interaction may trigger an anti-proliferative effect. Interacts with host LDLR. Interacts with the host extracellular matrix metalloproteinase MMP1. Interacts with host PRMT6; this interaction mediates Tat's methylation. Interacts with, and is ubiquitinated by MDM2/Hdm2. Interacts with host PSMC3 and HTATIP2. Interacts with STAB1; this interaction may overcome SATB1-mediated repression of IL2 and IL2RA (interleukin) in T cells by binding to the same domain than HDAC1. Interacts (when acetylated) with human CDK13, thereby increasing HIV-1 mRNA splicing and promoting the production of the doubly spliced HIV-1 protein Nef. Interacts with host TBP; this interaction modulates the activity of transcriptional pre-initiation complex. Interacts with host RELA. Interacts with host PLSCR1; this interaction negatively regulates Tat transactivation activity by altering its subcellular distribution. Post-translationally, asymmetrical arginine methylation by host PRMT6 seems to diminish the transactivation capacity of Tat and affects the interaction with host CCNT1. Acetylation by EP300, CREBBP, GCN5L2/GCN5 and PCAF regulates the transactivation activity of Tat. EP300-mediated acetylation of Lys-50 promotes dissociation of Tat from the TAR RNA through the competitive binding to PCAF's bromodomain. In addition, the non-acetylated Tat's N-terminus can also interact with PCAF. PCAF-mediated acetylation of Lys-28 enhances Tat's binding to CCNT1. Lys-50 is deacetylated by SIRT1. In terms of processing, polyubiquitination by host MDM2 does not target Tat to degradation, but activates its transactivation function and fosters interaction with CCNT1 and TAR RNA. Post-translationally, phosphorylated by EIF2AK2 on serine and threonine residues adjacent to the basic region important for TAR RNA binding and function. Phosphorylation of Tat by EIF2AK2 is dependent on the prior activation of EIF2AK2 by dsRNA.

Its subcellular location is the host nucleus. The protein resides in the host nucleolus. The protein localises to the host cytoplasm. It is found in the secreted. In terms of biological role, transcriptional activator that increases RNA Pol II processivity, thereby increasing the level of full-length viral transcripts. Recognizes a hairpin structure at the 5'-LTR of the nascent viral mRNAs referred to as the transactivation responsive RNA element (TAR) and recruits the cyclin T1-CDK9 complex (P-TEFb complex) that will in turn hyperphosphorylate the RNA polymerase II to allow efficient elongation. The CDK9 component of P-TEFb and other Tat-activated kinases hyperphosphorylate the C-terminus of RNA Pol II that becomes stabilized and much more processive. Other factors such as HTATSF1/Tat-SF1, SUPT5H/SPT5, and HTATIP2 are also important for Tat's function. Besides its effect on RNA Pol II processivity, Tat induces chromatin remodeling of proviral genes by recruiting the histone acetyltransferases (HATs) CREBBP, EP300 and PCAF to the chromatin. This also contributes to the increase in proviral transcription rate, especially when the provirus integrates in transcriptionally silent region of the host genome. To ensure maximal activation of the LTR, Tat mediates nuclear translocation of NF-kappa-B by interacting with host RELA. Through its interaction with host TBP, Tat may also modulate transcription initiation. Tat can reactivate a latently infected cell by penetrating in it and transactivating its LTR promoter. In the cytoplasm, Tat is thought to act as a translational activator of HIV-1 mRNAs. Functionally, extracellular circulating Tat can be endocytosed by surrounding uninfected cells via the binding to several surface receptors such as CD26, CXCR4, heparan sulfate proteoglycans (HSPG) or LDLR. Neurons are rarely infected, but they internalize Tat via their LDLR. Through its interaction with nuclear HATs, Tat is potentially able to control the acetylation-dependent cellular gene expression. Modulates the expression of many cellular genes involved in cell survival, proliferation or in coding for cytokines or cytokine receptors. Tat plays a role in T-cell and neurons apoptosis. Tat induced neurotoxicity and apoptosis probably contribute to neuroAIDS. Circulating Tat also acts as a chemokine-like and/or growth factor-like molecule that binds to specific receptors on the surface of the cells, affecting many cellular pathways. In the vascular system, Tat binds to ITGAV/ITGB3 and ITGA5/ITGB1 integrins dimers at the surface of endothelial cells and competes with bFGF for heparin-binding sites, leading to an excess of soluble bFGF. In Human immunodeficiency virus type 1 group M subtype B (isolate RF/HAT3) (HIV-1), this protein is Protein Tat.